Here is a 354-residue protein sequence, read N- to C-terminus: DNA-binding protein EMBP-1 (354 aa).

Disordered stretches follow at residues 1 to 24 (MASS…TPAQ), 106 to 193 (SAAG…RSAS), and 230 to 273 (EVNA…RKQQ). Low complexity-rich tracts occupy residues 127 to 140 (SSSG…QGSS) and 232 to 245 (NAAA…SLSQ). Basic and acidic residues predominate over residues 246-265 (MDERELKRERRKQSNRESAR). The region spanning 250 to 313 (ELKRERRKQS…KTMETENKKL (64 aa)) is the bZIP domain. Residues 252-271 (KRERRKQSNRESARRSRLRK) form a basic motif region. The tract at residues 278–299 (LAQKVSELTAANGTLRSELDQL) is leucine-zipper.

It belongs to the bZIP family. In terms of assembly, heterodimer.

The protein localises to the nucleus. Its function is as follows. Interacts specifically with the 8-bp sequence 5'-CACGTGGC-3'in the abscisic acid response element (ABARE). Also binds to the hexamer motif 5'-ACGTCA-3' of histone gene promoters. This Triticum aestivum (Wheat) protein is DNA-binding protein EMBP-1.